The following is a 95-amino-acid chain: UPF0235 protein Adeh_1087 (95 aa).

The protein belongs to the UPF0235 family.

This is UPF0235 protein Adeh_1087 from Anaeromyxobacter dehalogenans (strain 2CP-C).